The following is a 714-amino-acid chain: MFNTHKVEIEWGGRPLTIETGKIARQADGAVLATYGETAVLATVVSAKEPKPGQDFFPLTVNYQEKTYAAGKIPGGYFKREGRPSENETLVSRLIDRPIRPLFVDGYKNDTQVVITVLQHDLENNPDILSMVAASAALTISGVPFMGPISGARVGYIDGEYVLNPNIDEMPESKLDLVVAGTSEAVLMVESEAQELPEDVMLGAVMFGHKSFQPVIDAIIKLAEVAAKEPRDFQPEDLSELEAKVLAVVENDLREAYKITEKQARYAAVDAAKAKAKEHFFPEGVEETEMLAEQFATIFTHLQAKIVRWNILDTGNRIDGRDLSTVRPIVSEVGILPRTHGSALFTRGETQAIVVATLGTGEDEQMIDALTGTYKESFMLHYNFPPYSVGETGRMGSPGRREIGHGKLAWRAIHPMLPAAEQFPYTIRAVSEITESNGSSSMATVCGTSLALMDAGVPIVRPVAGIAMGLIKEGERFAVLSDILGDEDHLGDMDFKVAGTEFGITSLQMDIKIDGITEEIMKVALEQAKGGRVHILGEMAKAISSSRAELGEFAPRIEVMNIPTDKIRDVIGSGGKVIREIVEKTGAKINIEDDGTVKIASSNGKEIEAAKKWIHSIVAEPEVGEIYEGTVVKTADFGAFVNFFGPRDGLVHISQLAADRVAKTTDVVKEGQKVWVKLMGFDERGKVRLSMKVVDQETGKEIVAEKKKEEVDAE.

Residues D488 and D494 each coordinate Mg(2+). The 60-residue stretch at 555–614 folds into the KH domain; sequence PRIEVMNIPTDKIRDVIGSGGKVIREIVEKTGAKINIEDDGTVKIASSNGKEIEAAKKWI. An S1 motif domain is found at 624-692; it reads GEIYEGTVVK…ERGKVRLSMK (69 aa).

Belongs to the polyribonucleotide nucleotidyltransferase family. Mg(2+) serves as cofactor.

It localises to the cytoplasm. The enzyme catalyses RNA(n+1) + phosphate = RNA(n) + a ribonucleoside 5'-diphosphate. Functionally, involved in mRNA degradation. Catalyzes the phosphorolysis of single-stranded polyribonucleotides processively in the 3'- to 5'-direction. The protein is Polyribonucleotide nucleotidyltransferase of Brucella ovis (strain ATCC 25840 / 63/290 / NCTC 10512).